The following is a 226-amino-acid chain: Enolase-phosphatase E1 (226 aa).

It belongs to the HAD-like hydrolase superfamily. MasA/MtnC family. Monomer. The cofactor is Mg(2+).

The enzyme catalyses 5-methylsulfanyl-2,3-dioxopentyl phosphate + H2O = 1,2-dihydroxy-5-(methylsulfanyl)pent-1-en-3-one + phosphate. It participates in amino-acid biosynthesis; L-methionine biosynthesis via salvage pathway; L-methionine from S-methyl-5-thio-alpha-D-ribose 1-phosphate: step 3/6. Its pathway is amino-acid biosynthesis; L-methionine biosynthesis via salvage pathway; L-methionine from S-methyl-5-thio-alpha-D-ribose 1-phosphate: step 4/6. In terms of biological role, bifunctional enzyme that catalyzes the enolization of 2,3-diketo-5-methylthiopentyl-1-phosphate (DK-MTP-1-P) into the intermediate 2-hydroxy-3-keto-5-methylthiopentenyl-1-phosphate (HK-MTPenyl-1-P), which is then dephosphorylated to form the acireductone 1,2-dihydroxy-3-keto-5-methylthiopentene (DHK-MTPene). This chain is Enolase-phosphatase E1, found in Shewanella baltica (strain OS223).